Consider the following 155-residue polypeptide: Ribonuclease H (155 aa).

Residues 4–146 (NIDVVEIYTD…CDRLATEQIK (143 aa)) enclose the RNase H type-1 domain. Positions 13, 51, 73, and 138 each coordinate Mg(2+).

Belongs to the RNase H family. In terms of assembly, monomer. The cofactor is Mg(2+).

The protein resides in the cytoplasm. It catalyses the reaction Endonucleolytic cleavage to 5'-phosphomonoester.. Endonuclease that specifically degrades the RNA of RNA-DNA hybrids. The sequence is that of Ribonuclease H from Thermoanaerobacter pseudethanolicus (strain ATCC 33223 / 39E) (Clostridium thermohydrosulfuricum).